The following is a 60-amino-acid chain: Protein CADMIUM TOLERANCE 4 (60 aa).

The helical transmembrane segment at Gly-26 to Tyr-42 threads the bilayer.

This sequence belongs to the CYSTM1 family. In terms of tissue distribution, mainly expressed in shoots, and, to a lower extent, in roots.

It is found in the cell membrane. Its subcellular location is the secreted. The protein resides in the cell wall. Functionally, confers resistance to heavy metal ions (e.g. aluminium (Al)) by chelating them at the plasma membrane of root cells, thus stopping their entry and reducing their accumulation. The polypeptide is Protein CADMIUM TOLERANCE 4 (Oryza sativa subsp. japonica (Rice)).